The following is a 450-amino-acid chain: Cytidylate cyclase (450 aa).

Residues 97 to 236 form the Guanylate cyclase domain; sequence VTMFVDIRKS…LPVDMTAKLQ (140 aa). Phe-100 provides a ligand contact to a ribonucleoside 5'-triphosphate. The Mn(2+) site is built by Asp-102, Ile-103, and Asp-146. Residues 318–450 form an AGS-C domain region; it reads PNQFNFECFV…YRNIIGVYIK (133 aa).

The protein belongs to the adenylyl cyclase class-4/guanylyl cyclase family. Pyrimidine cyclase subfamily. Homodimer. Mn(2+) is required as a cofactor.

The protein resides in the cytoplasm. It carries out the reaction CTP = 3',5'-cyclic CMP + diphosphate. In E.coli strain MG1655 transformed with both genes cCMP appears between 15 and 30 minutes after infection with phage T5 (at protein level). No cCMP accumulates in uninfected cells. In terms of biological role, pycsar (pyrimidine cyclase system for antiphage resistance) provides immunity against bacteriophage. The pyrimidine cyclase (PycC) synthesizes cyclic nucleotides in response to infection; these serve as specific second messenger signals. The signal activates the adjacent effector, leading to bacterial cell death and abortive phage infection. A clade E Pycsar system. Functionally, the pyrimidine cyclase gene of a two-gene Pycsar system, generates cyclic CMP (cCMP) from CTP in response to bacteriophage infection. Has little to no activity on ATP, GTP or UTP. Expression of this and adjacent effector EcPycTM (AC P0DV25) confers resistance to bacteriophage P1 and T5; expression of this gene alone does not confer resistance. When cells expressing the Pycsar system are infected by phage T5 at low multiplicity of infection (0.2 MOI) the culture survives, at 2.0 MOI bacteria enter growth arrest. The same cells enter growth arrest after exposure to 250 uM cCMP but not cUMP; thus the effector protein responds only to the cNMP produced by its cognate NTP cyclase. Some of the cells treated with cCMP have abnormal membrane protrusions. The protein is Cytidylate cyclase of Escherichia coli.